Here is a 125-residue protein sequence, read N- to C-terminus: Small ribosomal subunit protein uS13 (125 aa).

Belongs to the universal ribosomal protein uS13 family. In terms of assembly, part of the 30S ribosomal subunit. Forms a loose heterodimer with protein S19. Forms two bridges to the 50S subunit in the 70S ribosome.

Its function is as follows. Located at the top of the head of the 30S subunit, it contacts several helices of the 16S rRNA. In the 70S ribosome it contacts the 23S rRNA (bridge B1a) and protein L5 of the 50S subunit (bridge B1b), connecting the 2 subunits; these bridges are implicated in subunit movement. Contacts the tRNAs in the A and P-sites. In Rickettsia felis (strain ATCC VR-1525 / URRWXCal2) (Rickettsia azadi), this protein is Small ribosomal subunit protein uS13.